Here is a 577-residue protein sequence, read N- to C-terminus: Arginine--tRNA ligase (577 aa).

Residues 122 to 132 (PNVAKEMHVGH) carry the 'HIGH' region motif.

Belongs to the class-I aminoacyl-tRNA synthetase family. As to quaternary structure, monomer.

The protein localises to the cytoplasm. The catalysed reaction is tRNA(Arg) + L-arginine + ATP = L-arginyl-tRNA(Arg) + AMP + diphosphate. The sequence is that of Arginine--tRNA ligase from Escherichia coli O6:K15:H31 (strain 536 / UPEC).